Here is a 347-residue protein sequence, read N- to C-terminus: Protein RecA (347 aa).

64 to 71 contacts ATP; sequence GPESSGKT.

The protein belongs to the RecA family.

Its subcellular location is the cytoplasm. Its function is as follows. Can catalyze the hydrolysis of ATP in the presence of single-stranded DNA, the ATP-dependent uptake of single-stranded DNA by duplex DNA, and the ATP-dependent hybridization of homologous single-stranded DNAs. It interacts with LexA causing its activation and leading to its autocatalytic cleavage. The chain is Protein RecA from Bartonella bacilliformis (strain ATCC 35685 / KC583 / Herrer 020/F12,63).